Consider the following 128-residue polypeptide: Large ribosomal subunit protein bL12 (128 aa).

It belongs to the bacterial ribosomal protein bL12 family. In terms of assembly, homodimer. Part of the ribosomal stalk of the 50S ribosomal subunit. Forms a multimeric L10(L12)X complex, where L10 forms an elongated spine to which 2 to 4 L12 dimers bind in a sequential fashion. Binds GTP-bound translation factors.

In terms of biological role, forms part of the ribosomal stalk which helps the ribosome interact with GTP-bound translation factors. Is thus essential for accurate translation. The chain is Large ribosomal subunit protein bL12 from Desulfosudis oleivorans (strain DSM 6200 / JCM 39069 / Hxd3) (Desulfococcus oleovorans).